The primary structure comprises 497 residues: Bifunctional protein GlmU (497 aa).

Residues 1–241 (MSPETIGPAA…RWQVEGANDR (241 aa)) form a pyrophosphorylase region. UDP-N-acetyl-alpha-D-glucosamine-binding positions include 14–17 (LAAG), K28, Q81, 86–87 (GT), 112–114 (YGD), G151, E166, N181, and N239. Mg(2+) is bound at residue D114. Residue N239 coordinates Mg(2+). Positions 242-262 (IQLSALAAEHNRRIIESWMRA) are linker. The N-acetyltransferase stretch occupies residues 263–497 (GVTVVDPATT…QATIEEGKQA (235 aa)). UDP-N-acetyl-alpha-D-glucosamine-binding residues include R344 and K362. H374 serves as the catalytic Proton acceptor. UDP-N-acetyl-alpha-D-glucosamine-binding residues include Y377 and N388. Residues 397–398 (NY), S416, and A434 contribute to the acetyl-CoA site.

The protein in the N-terminal section; belongs to the N-acetylglucosamine-1-phosphate uridyltransferase family. It in the C-terminal section; belongs to the transferase hexapeptide repeat family. In terms of assembly, homotrimer. The cofactor is Mg(2+).

It localises to the cytoplasm. The catalysed reaction is alpha-D-glucosamine 1-phosphate + acetyl-CoA = N-acetyl-alpha-D-glucosamine 1-phosphate + CoA + H(+). It catalyses the reaction N-acetyl-alpha-D-glucosamine 1-phosphate + UTP + H(+) = UDP-N-acetyl-alpha-D-glucosamine + diphosphate. Its pathway is nucleotide-sugar biosynthesis; UDP-N-acetyl-alpha-D-glucosamine biosynthesis; N-acetyl-alpha-D-glucosamine 1-phosphate from alpha-D-glucosamine 6-phosphate (route II): step 2/2. The protein operates within nucleotide-sugar biosynthesis; UDP-N-acetyl-alpha-D-glucosamine biosynthesis; UDP-N-acetyl-alpha-D-glucosamine from N-acetyl-alpha-D-glucosamine 1-phosphate: step 1/1. It functions in the pathway bacterial outer membrane biogenesis; LPS lipid A biosynthesis. In terms of biological role, catalyzes the last two sequential reactions in the de novo biosynthetic pathway for UDP-N-acetylglucosamine (UDP-GlcNAc). The C-terminal domain catalyzes the transfer of acetyl group from acetyl coenzyme A to glucosamine-1-phosphate (GlcN-1-P) to produce N-acetylglucosamine-1-phosphate (GlcNAc-1-P), which is converted into UDP-GlcNAc by the transfer of uridine 5-monophosphate (from uridine 5-triphosphate), a reaction catalyzed by the N-terminal domain. This Paenarthrobacter aurescens (strain TC1) protein is Bifunctional protein GlmU.